Reading from the N-terminus, the 188-residue chain is Elongation factor P (188 aa).

It belongs to the elongation factor P family.

The protein localises to the cytoplasm. Its pathway is protein biosynthesis; polypeptide chain elongation. Involved in peptide bond synthesis. Stimulates efficient translation and peptide-bond synthesis on native or reconstituted 70S ribosomes in vitro. Probably functions indirectly by altering the affinity of the ribosome for aminoacyl-tRNA, thus increasing their reactivity as acceptors for peptidyl transferase. The sequence is that of Elongation factor P from Christiangramia forsetii (strain DSM 17595 / CGMCC 1.15422 / KT0803) (Gramella forsetii).